The following is a 91-amino-acid chain: Small ribosomal subunit protein bS16 (91 aa).

The protein belongs to the bacterial ribosomal protein bS16 family.

The polypeptide is Small ribosomal subunit protein bS16 (Latilactobacillus sakei subsp. sakei (strain 23K) (Lactobacillus sakei subsp. sakei)).